The following is a 156-amino-acid chain: RNA pyrophosphohydrolase (156 aa).

The Nudix hydrolase domain maps to 6–148; that stretch reads NYRPNVAAIV…KKNIYVKVIK (143 aa). The Nudix box motif lies at 43–64; that stretch reads GGIDKGESAKNALFRELKEEIG.

Belongs to the Nudix hydrolase family. RppH subfamily. Requires a divalent metal cation as cofactor.

Its function is as follows. Accelerates the degradation of transcripts by removing pyrophosphate from the 5'-end of triphosphorylated RNA, leading to a more labile monophosphorylated state that can stimulate subsequent ribonuclease cleavage. The protein is RNA pyrophosphohydrolase of Campylobacter jejuni subsp. doylei (strain ATCC BAA-1458 / RM4099 / 269.97).